Consider the following 278-residue polypeptide: Checkpoint protein Hus1-like (278 aa).

This sequence belongs to the HUS1 family. Component of the 9-1-1 checkpoint clamp complex consisting of Rad9 isoform A, Rad1 and Hus1-like; the interactions with Rad1 and Rad9 are direct. This complex probably also forms with Rad9 isoform B, however 9-1-1 complex containing Rad9 isoform A localizes to the nuclear periphery. As to expression, expressed in ovary.

The protein resides in the cytoplasm. The protein localises to the nucleus envelope. Component of the 9-1-1 checkpoint clamp complex. Involved in both meiotic and somatic DNA damage responses. Essential for activation of the meiotic checkpoint in response to double-strand DNA breaks; required for the S-phase checkpoint but not the G2-M phase checkpoint. Involved in double strand break repair by homologous recombination during meiosis; influences the organization of chromosomal DNA in the meiotic nucleus. This Drosophila melanogaster (Fruit fly) protein is Checkpoint protein Hus1-like.